The following is a 459-amino-acid chain: Zeatin O-glucosyltransferase (459 aa).

The active-site Proton acceptor is histidine 26. Histidine 26 is an an anthocyanidin binding site. The active-site Charge relay is aspartate 125. Positions 148, 335, 337, 352, 355, 356, 357, 360, 376, and 377 each coordinate UDP-alpha-D-glucose.

This sequence belongs to the UDP-glycosyltransferase family.

The catalysed reaction is trans-zeatin + UDP-alpha-D-glucose = O-beta-D-glucosyl-trans-zeatin + UDP + H(+). Functionally, may regulate active versus storage forms of cytokinins, and could have an impact on seed growth. Can also use UDP-xylose to catalyze the formation of O-xylosylzeatin but at much lower affinity. The polypeptide is Zeatin O-glucosyltransferase (Phaseolus lunatus (Lima bean)).